The primary structure comprises 344 residues: F17d-G fimbrial adhesin (344 aa).

A signal peptide spans methionine 1–alanine 22. The tract at residues alanine 23–threonine 199 is receptor-binding lectin domain. Residues alanine 65–asparagine 66, aspartate 110–threonine 111, and serine 139–glycine 142 each bind a carbohydrate. The cysteines at positions 75 and 132 are disulfide-linked. The fimbrillin-binding domain stretch occupies residues valine 200–glutamine 344. Residues leucine 288–glycine 308 are disordered. Residues asparagine 299–glycine 308 show a composition bias toward polar residues.

This sequence belongs to the fimbrial protein family.

It localises to the fimbrium. Its function is as follows. Essential fimbrial adhesion factor that mediates binding to N-acetylglucosamine-containing receptors in the host intestinal microvilli, leading to colonization of the intestinal tissue, and diarrhea or septicemia. Also confers adhesiveness to laminin and basement membranes. This chain is F17d-G fimbrial adhesin (f17dG), found in Escherichia coli.